A 191-amino-acid polypeptide reads, in one-letter code: Cell division protein SepF (191 aa).

The span at 156 to 167 (EEASPSNMSNKG) shows a compositional bias: polar residues. Positions 156 to 191 (EEASPSNMSNKGNDLISKETSPAPEPAWGETVATAL) are disordered.

It belongs to the SepF family. Homodimer. Interacts with FtsZ.

The protein resides in the cytoplasm. Cell division protein that is part of the divisome complex and is recruited early to the Z-ring. Probably stimulates Z-ring formation, perhaps through the cross-linking of FtsZ protofilaments. Its function overlaps with FtsA. The polypeptide is Cell division protein SepF (Prochlorococcus marinus (strain NATL1A)).